Consider the following 431-residue polypeptide: Trigger factor (431 aa).

Residues 161–245 (TDIVIGDVQK…VKEIKRMELP (85 aa)) form the PPIase FKBP-type domain.

The protein belongs to the FKBP-type PPIase family. Tig subfamily.

The protein resides in the cytoplasm. The catalysed reaction is [protein]-peptidylproline (omega=180) = [protein]-peptidylproline (omega=0). Involved in protein export. Acts as a chaperone by maintaining the newly synthesized protein in an open conformation. Functions as a peptidyl-prolyl cis-trans isomerase. In Chloroherpeton thalassium (strain ATCC 35110 / GB-78), this protein is Trigger factor.